The following is a 452-amino-acid chain: Aspartyl/glutamyl-tRNA(Asn/Gln) amidotransferase subunit B (452 aa).

It belongs to the GatB/GatE family. GatB subfamily. Heterotrimer of A, B and C subunits.

It carries out the reaction L-glutamyl-tRNA(Gln) + L-glutamine + ATP + H2O = L-glutaminyl-tRNA(Gln) + L-glutamate + ADP + phosphate + H(+). It catalyses the reaction L-aspartyl-tRNA(Asn) + L-glutamine + ATP + H2O = L-asparaginyl-tRNA(Asn) + L-glutamate + ADP + phosphate + 2 H(+). In terms of biological role, allows the formation of correctly charged Asn-tRNA(Asn) or Gln-tRNA(Gln) through the transamidation of misacylated Asp-tRNA(Asn) or Glu-tRNA(Gln) in organisms which lack either or both of asparaginyl-tRNA or glutaminyl-tRNA synthetases. The reaction takes place in the presence of glutamine and ATP through an activated phospho-Asp-tRNA(Asn) or phospho-Glu-tRNA(Gln). This is Aspartyl/glutamyl-tRNA(Asn/Gln) amidotransferase subunit B from Methanosphaera stadtmanae (strain ATCC 43021 / DSM 3091 / JCM 11832 / MCB-3).